The primary structure comprises 65 residues: Large ribosomal subunit protein bL33c (65 aa).

It belongs to the bacterial ribosomal protein bL33 family.

The protein localises to the plastid. It localises to the chloroplast. The polypeptide is Large ribosomal subunit protein bL33c (Psilotum nudum (Whisk fern)).